The following is an 842-amino-acid chain: Ionotropic receptor 21a (842 aa).

A signal peptide spans 1-15 (MSYYWVALVLFTAQA). N-linked (GlcNAc...) asparagine glycosylation occurs at N325. The next 2 membrane-spanning stretches (helical) occupy residues 405–425 (WPVWVALICVYLGGIFPIVFT) and 437–457 (WGEVENMFWYVFGMFTNAFSF). N469 carries N-linked (GlcNAc...) asparagine glycosylation. A helical transmembrane segment spans residues 479–499 (WLFTIIITSCYTGSIIAFVTL). N533, N558, N583, and N588 each carry an N-linked (GlcNAc...) asparagine glycan. A helical membrane pass occupies residues 680 to 700 (MFLLMALGYFLGATALVSEIV). Positions 722-745 (WSSASSGSMLRTNAEQLSHDKRKA) are disordered. N765 and N797 each carry an N-linked (GlcNAc...) asparagine glycan.

This sequence belongs to the glutamate-gated ion channel (TC 1.A.10.1) family. In terms of tissue distribution, expressed in the dorsal organ cool cells. In the antenna, expressed in approximately six neurons in the arista as well as five to ten neurons near the third chamber of the sacculus.

The protein localises to the cell membrane. Integral part of a neural sensory system in the antenna that provides the neural basis for the response to environmental changes in temperature (thermosensation). Together with Ir25a and Ir93a, mediates the response of the dorsal organ cool cells, a trio of cool-responsive neurons, to cooling and is required for cool avoidance behavior. The protein is Ionotropic receptor 21a of Drosophila melanogaster (Fruit fly).